The primary structure comprises 257 residues: MVLIRVLANLLILQLSYAQKSSELVIGGHPCNINEHPFLVLVYHDGYQCGGTLINEEWVLTAAHCDGKKMKLQFGLHSKNVPNKDKQTRVPKEKFFCLSSKNFIKWGKDIMLIRLNRPVNNSTHIAPLSLPSSPPSQNTVCNIMGWGTISPTKEIYPDVPHCANINILDHAVCRAFYPGLLEKSKTLCAGILQGGKDICQGDSGGPLICNGQIQGIVSVGGDPCAEPRVPAIYTKVFDHLDWIKSIIAGNTAATCPL.

Residues 1-18 form the signal peptide; the sequence is MVLIRVLANLLILQLSYA. The propeptide occupies 19 to 24; the sequence is QKSSEL. In terms of domain architecture, Peptidase S1 spans 25–248; it reads VIGGHPCNIN…HLDWIKSIIA (224 aa). 6 disulfides stabilise this stretch: Cys-31–Cys-162, Cys-49–Cys-65, Cys-97–Cys-255, Cys-141–Cys-209, Cys-173–Cys-188, and Cys-199–Cys-224. Residues His-64 and Asp-109 each act as charge relay system in the active site. Residues Asn-120 and Asn-121 are each glycosylated (N-linked (GlcNAc...) asparagine). Ser-203 (charge relay system) is an active-site residue.

Belongs to the peptidase S1 family. Snake venom subfamily. As to quaternary structure, monomer. As to expression, expressed by the venom gland.

It localises to the secreted. Its function is as follows. Snake venom serine protease that may act in the hemostasis system of the prey. This is Snake venom serine protease KN2 from Trimeresurus stejnegeri (Chinese green tree viper).